The chain runs to 304 residues: Putative ankyrin repeat protein R598 (304 aa).

ANK repeat units follow at residues 7 to 36 (NIVT…SINL), 77 to 107 (YIST…PVDF), 122 to 151 (GSNH…DVNA), 152 to 181 (HNYL…NVLR), 183 to 209 (ANGN…EIDM), 210 to 239 (NLSR…DINK), and 265 to 293 (FDFT…NVDI).

This is Putative ankyrin repeat protein R598 from Acanthamoeba polyphaga (Amoeba).